The following is a 252-amino-acid chain: Cilia- and flagella-associated protein 300 (252 aa).

The protein belongs to the CFAP300 family.

The protein resides in the cytoplasm. The protein localises to the cytoskeleton. It is found in the cilium axoneme. Its function is as follows. Cilium- and flagellum-specific protein that plays a role in axonemal structure organization and motility. Plays a role in outer and inner axonemal dynein arm assembly. The polypeptide is Cilia- and flagella-associated protein 300 (Paramecium tetraurelia).